Consider the following 446-residue polypeptide: Exodeoxyribonuclease 7 large subunit (446 aa).

Belongs to the XseA family. As to quaternary structure, heterooligomer composed of large and small subunits.

Its subcellular location is the cytoplasm. It catalyses the reaction Exonucleolytic cleavage in either 5'- to 3'- or 3'- to 5'-direction to yield nucleoside 5'-phosphates.. Functionally, bidirectionally degrades single-stranded DNA into large acid-insoluble oligonucleotides, which are then degraded further into small acid-soluble oligonucleotides. This chain is Exodeoxyribonuclease 7 large subunit, found in Ligilactobacillus salivarius (strain UCC118) (Lactobacillus salivarius).